A 184-amino-acid chain; its full sequence is GTP cyclohydrolase 1 (184 aa).

Residues C75, H78, and C146 each coordinate Zn(2+).

Belongs to the GTP cyclohydrolase I family. In terms of assembly, homomer.

It catalyses the reaction GTP + H2O = 7,8-dihydroneopterin 3'-triphosphate + formate + H(+). It participates in cofactor biosynthesis; 7,8-dihydroneopterin triphosphate biosynthesis; 7,8-dihydroneopterin triphosphate from GTP: step 1/1. The chain is GTP cyclohydrolase 1 from Streptococcus pneumoniae (strain Taiwan19F-14).